Reading from the N-terminus, the 758-residue chain is General transcription and DNA repair factor IIH helicase subunit XPD (758 aa).

In terms of domain architecture, Helicase ATP-binding spans 7-285 (DVTVYFPYDN…TDAGRLRAEY (279 aa)). 42-49 (MPTGTGKT) provides a ligand contact to ATP. [4Fe-4S] cluster-binding residues include Cys-116, Cys-134, Cys-155, and Cys-190. Positions 234 to 238 (DEAHN) match the DEAH box motif.

This sequence belongs to the helicase family. RAD3/XPD subfamily. As to quaternary structure, component of the 7-subunit TFIIH core complex composed of XPB, XPD, TFB1/GTF2H1, GTF2H2/P44, TFB4/GTF2H3, TFB2/GTF2H4 and TFB5/GTF2H5, which is active in NER. The core complex associates with the 3-subunit CDK-activating kinase (CAK) module composed of CYCH1/cyclin H1, CDKD and MAT1/At4g30820 to form the 10-subunit holoenzyme (holo-TFIIH) active in transcription. Interacts with GTF2H2/p44. The cofactor is [4Fe-4S] cluster. Expressed at low levels in all tissues.

The protein resides in the nucleus. The enzyme catalyses Couples ATP hydrolysis with the unwinding of duplex DNA at the replication fork by translocating in the 5'-3' direction. This creates two antiparallel DNA single strands (ssDNA). The leading ssDNA polymer is the template for DNA polymerase III holoenzyme which synthesizes a continuous strand.. It carries out the reaction ATP + H2O = ADP + phosphate + H(+). Its function is as follows. ATP-dependent 5'-3' DNA helicase, component of the general transcription and DNA repair factor IIH (TFIIH) core complex, which is involved in general and transcription-coupled nucleotide excision repair (NER) of damaged DNA and, when complexed to CDK-activating kinase (CAK), involved in transcription by RNA polymerase II. In NER, TFIIH acts by opening DNA around the lesion to allow the excision of the damaged oligonucleotide and its replacement by a new DNA fragment. The ATP-dependent helicase activity of XPD is required for DNA opening. In transcription, TFIIH has an essential role in transcription initiation. When the pre-initiation complex (PIC) has been established, TFIIH is required for promoter opening and promoter escape. Phosphorylation of the C-terminal tail (CTD) of the largest subunit of RNA polymerase II by the kinase module CAK controls the initiation of transcription. XPD acts by forming a bridge between CAK and the core-TFIIH complex. Essential during plant growth. May negatively regulate a common response program mediated by UV damage and heat stress, that leads to tissue death and reduced chloroplast function. The protein is General transcription and DNA repair factor IIH helicase subunit XPD of Arabidopsis thaliana (Mouse-ear cress).